The primary structure comprises 190 residues: Interferon alpha-11 (190 aa).

The signal sequence occupies residues 1–23 (MARLCAFLMILIVMSYWSTCSLG). 2 cysteine pairs are disulfide-bonded: C24-C122 and C52-C162. N101 is a glycosylation site (N-linked (GlcNAc...) asparagine).

It belongs to the alpha/beta interferon family. N-glycosylated.

The protein localises to the secreted. In terms of biological role, has antiviral and antiproliferative activities. Produced by macrophages and stimulates the production of two enzymes: a protein kinase and an oligoadenylate synthetase. During viral infection, mediates antiviral effect, either directly by inducing interferon-stimulated genes, either indirectly through stimulation of natural killer cells enabling them to control viral replication. In Mus musculus (Mouse), this protein is Interferon alpha-11 (Ifna11).